A 65-amino-acid polypeptide reads, in one-letter code: Ferredoxin-1 (65 aa).

In terms of domain architecture, 4Fe-4S ferredoxin-type spans 2–30 (AMKIDPELCTSCGDCEPVCPTNAIAPKKG). The [4Fe-4S] cluster site is built by Cys10, Cys13, Cys16, Cys20, Cys39, Cys42, Cys51, and Cys55.

Requires [4Fe-4S] cluster as cofactor.

In terms of biological role, ferredoxins are iron-sulfur proteins that transfer electrons in a wide variety of metabolic reactions. This ferredoxin probably participates in nitrogen fixation. The chain is Ferredoxin-1 (fdxN) from Rhodobacter capsulatus (Rhodopseudomonas capsulata).